The chain runs to 301 residues: Acetylglutamate kinase (301 aa).

Substrate is bound by residues 68 to 69 (GG), Arg90, and Asn195.

It belongs to the acetylglutamate kinase family. ArgB subfamily.

It is found in the cytoplasm. It carries out the reaction N-acetyl-L-glutamate + ATP = N-acetyl-L-glutamyl 5-phosphate + ADP. Its pathway is amino-acid biosynthesis; L-arginine biosynthesis; N(2)-acetyl-L-ornithine from L-glutamate: step 2/4. In terms of biological role, catalyzes the ATP-dependent phosphorylation of N-acetyl-L-glutamate. The polypeptide is Acetylglutamate kinase (Pseudomonas savastanoi pv. phaseolicola (strain 1448A / Race 6) (Pseudomonas syringae pv. phaseolicola (strain 1448A / Race 6))).